The following is a 322-amino-acid chain: Light-dependent protochlorophyllide reductase (322 aa).

Belongs to the short-chain dehydrogenases/reductases (SDR) family. POR subfamily.

The catalysed reaction is chlorophyllide a + NADP(+) = protochlorophyllide a + NADPH + H(+). It functions in the pathway porphyrin-containing compound metabolism; chlorophyll biosynthesis. In terms of biological role, phototransformation of protochlorophyllide (Pchlide) to chlorophyllide (Chlide). In Synechocystis sp. (strain ATCC 27184 / PCC 6803 / Kazusa), this protein is Light-dependent protochlorophyllide reductase (por).